The following is a 317-amino-acid chain: UAP56-interacting factor (317 aa).

An N-acetylmethionine modification is found at methionine 1. Residues 1 to 26 (MNRFGTRLVGATATPPPPPKARSNEN) are disordered. Threonine 14 is subject to Phosphothreonine. The residue at position 23 (serine 23) is a Phosphoserine. The UAP56-binding motif motif lies at 26 to 44 (NLDKIDMSLDDIIKLNRKE). Residues serine 60 and serine 117 each carry the phosphoserine modification. A Glycyl lysine isopeptide (Lys-Gly) (interchain with G-Cter in SUMO1) cross-link involves residue lysine 139. Lysine 260 is covalently cross-linked (Glycyl lysine isopeptide (Lys-Gly) (interchain with G-Cter in SUMO2)).

This sequence belongs to the UIF family. As to quaternary structure, interacts with DDX39B/UAP56 and NXF1; interaction with DDX39B/UAP56 and NXF1 are mutually exclusive. Interacts with SSRP1; required for its recruitment to mRNAs. Interacts with CHTOP.

It is found in the nucleus. Its subcellular location is the nucleoplasm. The protein localises to the nucleus speckle. In terms of biological role, required for mRNA export from the nucleus to the cytoplasm. Acts as an adapter that uses the DDX39B/UAP56-NFX1 pathway to ensure efficient mRNA export and delivering to the nuclear pore. Associates with spliced and unspliced mRNAs simultaneously with ALYREF/THOC4. This is UAP56-interacting factor (Fyttd1) from Mus musculus (Mouse).